Here is a 154-residue protein sequence, read N- to C-terminus: DNA gyrase inhibitor (154 aa).

This sequence belongs to the DNA gyrase inhibitor family. Interacts with DNA gyrase.

The protein resides in the cytoplasm. Its function is as follows. Inhibits the supercoiling activity of DNA gyrase. Acts by inhibiting DNA gyrase at an early step, prior to (or at the step of) binding of DNA by the gyrase. It protects cells against toxins that target DNA gyrase, by inhibiting activity of these toxins and reducing the formation of lethal double-strand breaks in the cell. The chain is DNA gyrase inhibitor from Pectobacterium carotovorum subsp. carotovorum (strain PC1).